Consider the following 656-residue polypeptide: Protein O1 homolog (656 aa).

Residues 544–564 (FIKKVILANVIFEYIFTLIII) form a helical membrane-spanning segment.

This sequence belongs to the chordopoxvirinae O1 family.

It is found in the membrane. This is Protein O1 homolog from Vertebrata (FPV).